The sequence spans 440 residues: 3-phosphoshikimate 1-carboxyvinyltransferase (440 aa).

The 3-phosphoshikimate site is built by K26, S27, and R31. K26 serves as a coordination point for phosphoenolpyruvate. Positions 99 and 127 each coordinate phosphoenolpyruvate. 3-phosphoshikimate-binding residues include S172, Q174, D320, and K347. Position 174 (Q174) interacts with phosphoenolpyruvate. D320 serves as the catalytic Proton acceptor. R351 and R392 together coordinate phosphoenolpyruvate.

Belongs to the EPSP synthase family. As to quaternary structure, monomer.

It localises to the cytoplasm. The catalysed reaction is 3-phosphoshikimate + phosphoenolpyruvate = 5-O-(1-carboxyvinyl)-3-phosphoshikimate + phosphate. Its pathway is metabolic intermediate biosynthesis; chorismate biosynthesis; chorismate from D-erythrose 4-phosphate and phosphoenolpyruvate: step 6/7. Functionally, catalyzes the transfer of the enolpyruvyl moiety of phosphoenolpyruvate (PEP) to the 5-hydroxyl of shikimate-3-phosphate (S3P) to produce enolpyruvyl shikimate-3-phosphate and inorganic phosphate. The protein is 3-phosphoshikimate 1-carboxyvinyltransferase of Xanthomonas axonopodis pv. citri (strain 306).